A 521-amino-acid chain; its full sequence is Peroxisomal membrane protein PEX23 (521 aa).

Positions 1–26 (MPTDPNSNPVSKAGLTPSSINSNISE) are disordered. Asn23 and Asn53 each carry an N-linked (GlcNAc...) asparagine glycan. Transmembrane regions (helical) follow at residues 111–128 (SYISVLLVTTATLFILYF) and 133–150 (IYLGHLSIVGLIFLYSIF). A glycan (N-linked (GlcNAc...) asparagine) is linked at Asn189. The helical transmembrane segment at 198–217 (LLFTSIFLSPGYILVCYLLF) threads the bilayer. Residue Asn279 is glycosylated (N-linked (GlcNAc...) asparagine). The tract at residues 425 to 446 (VSPGDDSSTDSASLPHSASETV) is disordered. Polar residues predominate over residues 429–446 (DDSSTDSASLPHSASETV). N-linked (GlcNAc...) asparagine glycosylation is found at Asn463 and Asn467. A disordered region spans residues 465 to 486 (SGNITTSAETAPDSAGTAKKRK).

The protein belongs to the PEX28-32 family. PEX32 subfamily.

The protein localises to the endoplasmic reticulum membrane. Functionally, with PEX29, contributes to the formation of endoplasmic reticulum-mitochondria junctions which are important for mitochondrial function. Involved in lipid dropplets formation. The polypeptide is Peroxisomal membrane protein PEX23 (Ogataea parapolymorpha (strain ATCC 26012 / BCRC 20466 / JCM 22074 / NRRL Y-7560 / DL-1) (Yeast)).